Consider the following 327-residue polypeptide: ATP-dependent 6-phosphofructokinase (327 aa).

Residues G11, 72–73, and 102–105 contribute to the ATP site; these read RS and GDGS. D103 contributes to the Mg(2+) binding site. Residue 127–129 participates in substrate binding; sequence TID. D129 functions as the Proton acceptor in the catalytic mechanism. R156 contacts ADP. Substrate contacts are provided by residues R164 and 171–173; that span reads MGR. Residue 187-189 participates in ADP binding; it reads GAE. Residues E224, R245, and 251–254 each bind substrate; that span reads HIQR.

The protein belongs to the phosphofructokinase type A (PFKA) family. ATP-dependent PFK group I subfamily. Prokaryotic clade 'B1' sub-subfamily. Homotetramer. Mg(2+) serves as cofactor.

It localises to the cytoplasm. The enzyme catalyses beta-D-fructose 6-phosphate + ATP = beta-D-fructose 1,6-bisphosphate + ADP + H(+). It participates in carbohydrate degradation; glycolysis; D-glyceraldehyde 3-phosphate and glycerone phosphate from D-glucose: step 3/4. Its activity is regulated as follows. Allosterically activated by ADP and other diphosphonucleosides, and allosterically inhibited by phosphoenolpyruvate. Catalyzes the phosphorylation of D-fructose 6-phosphate to fructose 1,6-bisphosphate by ATP, the first committing step of glycolysis. This is ATP-dependent 6-phosphofructokinase from Sulfurovum sp. (strain NBC37-1).